The following is a 248-amino-acid chain: 3-deoxy-manno-octulosonate cytidylyltransferase (248 aa).

Belongs to the KdsB family.

The protein localises to the cytoplasm. The enzyme catalyses 3-deoxy-alpha-D-manno-oct-2-ulosonate + CTP = CMP-3-deoxy-beta-D-manno-octulosonate + diphosphate. Its pathway is nucleotide-sugar biosynthesis; CMP-3-deoxy-D-manno-octulosonate biosynthesis; CMP-3-deoxy-D-manno-octulosonate from 3-deoxy-D-manno-octulosonate and CTP: step 1/1. The protein operates within bacterial outer membrane biogenesis; lipopolysaccharide biosynthesis. Activates KDO (a required 8-carbon sugar) for incorporation into bacterial lipopolysaccharide in Gram-negative bacteria. This is 3-deoxy-manno-octulosonate cytidylyltransferase from Chlorobaculum parvum (strain DSM 263 / NCIMB 8327) (Chlorobium vibrioforme subsp. thiosulfatophilum).